Consider the following 206-residue polypeptide: MTRETSMPKHDKNKSAIPSKMADRIEHAILDSRRIFISDAVDSGSASEIIRKLWYLELTDPGKPILFVINSPGGAVDSGFAIWDQIKMITSPVTTLVTGLAASMGSILSLCASPGRRFATPHSRIMIHQPLLSGVIKGQATDLEIQAKEMLKTRNGLIEIYVQATGKNFAAIEKAIDRDTWMTAQEALEFGLLDKVINSFEEIEST.

Residue Ser103 is the Nucleophile of the active site. Residue His128 is part of the active site.

This sequence belongs to the peptidase S14 family. As to quaternary structure, fourteen ClpP subunits assemble into 2 heptameric rings which stack back to back to give a disk-like structure with a central cavity, resembling the structure of eukaryotic proteasomes.

The protein localises to the cytoplasm. The catalysed reaction is Hydrolysis of proteins to small peptides in the presence of ATP and magnesium. alpha-casein is the usual test substrate. In the absence of ATP, only oligopeptides shorter than five residues are hydrolyzed (such as succinyl-Leu-Tyr-|-NHMec, and Leu-Tyr-Leu-|-Tyr-Trp, in which cleavage of the -Tyr-|-Leu- and -Tyr-|-Trp bonds also occurs).. Cleaves peptides in various proteins in a process that requires ATP hydrolysis. Has a chymotrypsin-like activity. Plays a major role in the degradation of misfolded proteins. This chain is ATP-dependent Clp protease proteolytic subunit 1, found in Protochlamydia amoebophila (strain UWE25).